The primary structure comprises 433 residues: Oxysterol-binding protein-like protein OBPa (433 aa).

The protein belongs to the OSBP family.

In Candida albicans (strain SC5314 / ATCC MYA-2876) (Yeast), this protein is Oxysterol-binding protein-like protein OBPa (OBPA).